Reading from the N-terminus, the 237-residue chain is AA9 family lytic polysaccharide monooxygenase C (237 aa).

Residues 1–15 form the signal peptide; the sequence is MKVLAPLILAGAASA. Residues H16 and H99 each contribute to the Cu(2+) site. Disulfide bonds link C54/C185 and C155/C237. N112 carries an N-linked (GlcNAc...) asparagine glycan. O2-binding residues include H171 and Q180. Cu(2+) is bound at residue Y182.

This sequence belongs to the polysaccharide monooxygenase AA9 family. Requires Cu(2+) as cofactor.

It localises to the secreted. It carries out the reaction [(1-&gt;4)-beta-D-glucosyl]n+m + reduced acceptor + O2 = 4-dehydro-beta-D-glucosyl-[(1-&gt;4)-beta-D-glucosyl]n-1 + [(1-&gt;4)-beta-D-glucosyl]m + acceptor + H2O.. With respect to regulation, is able to utilize various natural phenolic compounds as reducing agents. Most of these reducing agents are present in plants, either free or as lignin building blocks, such as sinapic acid, or as flavonoids such as catechin and dopamine. Phenolic compounds with 1,2-benzenediol and 1,2,3-benzenetriol moieties yield the highest release of oxidized and non-oxidized glucooligosaccharides from cellulose compared to monophenols or sulfur-containing compounds. Lytic polysaccharide monooxygenase (LPMO) that depolymerizes crystalline and amorphous polysaccharides via the oxidation of scissile alpha- or beta-(1-4)-glycosidic bonds, yielding C4 oxidation products. Catalysis by LPMOs requires the reduction of the active-site copper from Cu(II) to Cu(I) by a reducing agent and H(2)O(2) or O(2) as a cosubstrate. Shows oxidative cleavage of beta-(1-3, 1-4)-glucan from oat spelt or xyloglucan from tamarind seed, in addition to cellulose. The chain is AA9 family lytic polysaccharide monooxygenase C from Thermothelomyces thermophilus (strain ATCC 42464 / BCRC 31852 / DSM 1799) (Sporotrichum thermophile).